A 163-amino-acid polypeptide reads, in one-letter code: Cyanate hydratase (163 aa).

Residues R103, E106, and S129 contribute to the active site.

This sequence belongs to the cyanase family.

The catalysed reaction is cyanate + hydrogencarbonate + 3 H(+) = NH4(+) + 2 CO2. Catalyzes the reaction of cyanate with bicarbonate to produce ammonia and carbon dioxide. The protein is Cyanate hydratase of Talaromyces marneffei (strain ATCC 18224 / CBS 334.59 / QM 7333) (Penicillium marneffei).